A 175-amino-acid polypeptide reads, in one-letter code: MGRTLESKKQIVEEIKGLLDKADMALVLDYQGLSIKEMSDLRSRLEQSSGICKVTKNTLMRKAINGDATWSGLESLLNGTNAFVLVKGDVGSALKAVQAFQKETKKSETKGGLYEGKLLTQDEIKAIAALPSKEALMAQIAGALNSITTKIAVGVNEIPSGLARSLKQHAENSES.

It belongs to the universal ribosomal protein uL10 family. Part of the ribosomal stalk of the 50S ribosomal subunit. The N-terminus interacts with L11 and the large rRNA to form the base of the stalk. The C-terminus forms an elongated spine to which L12 dimers bind in a sequential fashion forming a multimeric L10(L12)X complex.

In terms of biological role, forms part of the ribosomal stalk, playing a central role in the interaction of the ribosome with GTP-bound translation factors. This Prochlorococcus marinus (strain SARG / CCMP1375 / SS120) protein is Large ribosomal subunit protein uL10.